Here is a 27-residue protein sequence, read N- to C-terminus: Endoglucanase gh5 (27 aa).

Residue E6 is the Nucleophile of the active site.

The catalysed reaction is Endohydrolysis of (1-&gt;4)-beta-D-glucosidic linkages in cellulose, lichenin and cereal beta-D-glucans.. With respect to regulation, activity is stimulated by zinc ions, potassium ions and DTT. Activity is inhibited by manganese and chloride ions. Functionally, endoglucanase (EG) that cleaves the internal beta-1,4-glucosidic bonds in cellulose. This chain is Endoglucanase gh5, found in Fomes meliae (Fomitopsis meliae).